Consider the following 635-residue polypeptide: Threonine--tRNA ligase (635 aa).

Residues 1–61 (MINISFPDGS…EHDCKLRILT (61 aa)) form the TGS domain. Positions 242-533 (DHRKIGKELD…LIEEYAGKFP (292 aa)) are catalytic. Zn(2+)-binding residues include C333, H384, and H510.

The protein belongs to the class-II aminoacyl-tRNA synthetase family. Homodimer. It depends on Zn(2+) as a cofactor.

The protein resides in the cytoplasm. It carries out the reaction tRNA(Thr) + L-threonine + ATP = L-threonyl-tRNA(Thr) + AMP + diphosphate + H(+). Catalyzes the attachment of threonine to tRNA(Thr) in a two-step reaction: L-threonine is first activated by ATP to form Thr-AMP and then transferred to the acceptor end of tRNA(Thr). Also edits incorrectly charged L-seryl-tRNA(Thr). This chain is Threonine--tRNA ligase, found in Rickettsia typhi (strain ATCC VR-144 / Wilmington).